The chain runs to 990 residues: Leucine--tRNA ligase (990 aa).

The 'HIGH' region signature appears at 74-85; the sequence is PYPSGKGLHVGH. Residues 573–602 form a disordered region; sequence LPINLPDVPDYSPKTFDPEDAESDPEAPLS. Positions 763 to 767 match the 'KMSKS' region motif; it reads KMGKS. K766 is a binding site for ATP.

This sequence belongs to the class-I aminoacyl-tRNA synthetase family.

It localises to the cytoplasm. The enzyme catalyses tRNA(Leu) + L-leucine + ATP = L-leucyl-tRNA(Leu) + AMP + diphosphate. This is Leucine--tRNA ligase from Bifidobacterium adolescentis (strain ATCC 15703 / DSM 20083 / NCTC 11814 / E194a).